The following is a 645-amino-acid chain: Aminopeptidase P1 (645 aa).

S2 carries the N-acetylserine modification. Positions 69 and 420 each coordinate a peptide. Positions 440, 451, and 514 each coordinate Mn(2+). The a peptide site is built by H514, H523, and E549. Mn(2+) is bound by residues E549 and E563.

This sequence belongs to the peptidase M24B family. Homodimer. Interacts with N-1-naphthylphthalamic acid (NPA). The cofactor is Mn(2+). Zn(2+) is required as a cofactor. Glycosylated. Also present in a non-glycosylated form. In terms of tissue distribution, ubiquitous with preferential expression in 5 days-old seedlings, roots, flowers, inflorescences and rosette leaves (at protein levels).

It localises to the cytoplasm. The protein localises to the cell membrane. The protein resides in the microsome membrane. It catalyses the reaction Release of any N-terminal amino acid, including proline, that is linked to proline, even from a dipeptide or tripeptide.. Inhibited by EGTA and apstatin, and, to some extent, by the flavonoid kaempferol. Catalyzes the removal of a penultimate prolyl residue from the N-termini of peptides, such as Arg-Pro-Pro. Aminopeptidase that binds to the auxin transport inhibitor N-1-naphthylphthalamic acid (NPA). May play a negative role in the regulation of PIN auxin transport proteins. This chain is Aminopeptidase P1, found in Arabidopsis thaliana (Mouse-ear cress).